We begin with the raw amino-acid sequence, 557 residues long: 2-succinyl-5-enolpyruvyl-6-hydroxy-3-cyclohexene-1-carboxylate synthase (557 aa).

The tract at residues Tyr183–Pro206 is disordered.

The protein belongs to the TPP enzyme family. MenD subfamily. Homodimer. The cofactor is Mg(2+). It depends on Mn(2+) as a cofactor. Thiamine diphosphate serves as cofactor.

It carries out the reaction isochorismate + 2-oxoglutarate + H(+) = 5-enolpyruvoyl-6-hydroxy-2-succinyl-cyclohex-3-ene-1-carboxylate + CO2. Its pathway is quinol/quinone metabolism; 1,4-dihydroxy-2-naphthoate biosynthesis; 1,4-dihydroxy-2-naphthoate from chorismate: step 2/7. It participates in quinol/quinone metabolism; menaquinone biosynthesis. Its function is as follows. Catalyzes the thiamine diphosphate-dependent decarboxylation of 2-oxoglutarate and the subsequent addition of the resulting succinic semialdehyde-thiamine pyrophosphate anion to isochorismate to yield 2-succinyl-5-enolpyruvyl-6-hydroxy-3-cyclohexene-1-carboxylate (SEPHCHC). This chain is 2-succinyl-5-enolpyruvyl-6-hydroxy-3-cyclohexene-1-carboxylate synthase, found in Halorhodospira halophila (strain DSM 244 / SL1) (Ectothiorhodospira halophila (strain DSM 244 / SL1)).